The sequence spans 78 residues: Large ribosomal subunit protein bL28 (78 aa).

Belongs to the bacterial ribosomal protein bL28 family.

In Histophilus somni (strain 129Pt) (Haemophilus somnus), this protein is Large ribosomal subunit protein bL28.